The sequence spans 319 residues: Cytochrome f (319 aa).

An N-terminal signal peptide occupies residues 1-34 (MQNRNTYEWAKKMTRLISVLVMIHIITRTSISNA). Heme-binding residues include tyrosine 35, cysteine 55, cysteine 58, and histidine 59. A helical transmembrane segment spans residues 287-304 (GLLLFLASVILAQIFLVL).

It belongs to the cytochrome f family. As to quaternary structure, the 4 large subunits of the cytochrome b6-f complex are cytochrome b6, subunit IV (17 kDa polypeptide, petD), cytochrome f and the Rieske protein, while the 4 small subunits are PetG, PetL, PetM and PetN. The complex functions as a dimer. The cofactor is heme.

It is found in the plastid. The protein localises to the chloroplast thylakoid membrane. Functionally, component of the cytochrome b6-f complex, which mediates electron transfer between photosystem II (PSII) and photosystem I (PSI), cyclic electron flow around PSI, and state transitions. This Pinus thunbergii (Japanese black pine) protein is Cytochrome f (petA).